The following is a 219-amino-acid chain: Elongation factor Ts (219 aa).

The involved in Mg(2+) ion dislocation from EF-Tu stretch occupies residues 83 to 86 (TDFV).

This sequence belongs to the EF-Ts family.

It is found in the cytoplasm. Functionally, associates with the EF-Tu.GDP complex and induces the exchange of GDP to GTP. It remains bound to the aminoacyl-tRNA.EF-Tu.GTP complex up to the GTP hydrolysis stage on the ribosome. This chain is Elongation factor Ts, found in Synechococcus sp. (strain WH7803).